The following is a 224-amino-acid chain: V-type ATP synthase subunit D (224 aa).

The segment covering 205-214 (AKAKQQRKDI) has biased composition (basic and acidic residues). The segment at 205-224 (AKAKQQRKDIQSGNHGSAAD) is disordered. The span at 215 to 224 (QSGNHGSAAD) shows a compositional bias: polar residues.

Belongs to the V-ATPase D subunit family.

Functionally, produces ATP from ADP in the presence of a proton gradient across the membrane. The polypeptide is V-type ATP synthase subunit D (Deinococcus deserti (strain DSM 17065 / CIP 109153 / LMG 22923 / VCD115)).